Reading from the N-terminus, the 197-residue chain is Protein shisa-4 (197 aa).

The signal sequence occupies residues 1–27; it reads MPPAGPRGTAPLAAVVLLVLGAPLALA. The Extracellular segment spans residues 28 to 87; it reads SEDCLWYLDRNGSWHPGFDCEFFTFCCGTCYQRYCCRDLTLLITERQQKHCLAFSPKTIA. A helical transmembrane segment spans residues 88 to 108; the sequence is GIASAVILFVAVVATTICCFL. At 109-197 the chain is on the cytoplasmic side; sequence CSCCYLYRRR…MPPQPSYPGA (89 aa).

The protein belongs to the shisa family.

The protein localises to the membrane. This Mus musculus (Mouse) protein is Protein shisa-4 (Shisa4).